A 405-amino-acid polypeptide reads, in one-letter code: Diaminopimelate decarboxylase (405 aa).

Lys46 carries the post-translational modification N6-(pyridoxal phosphate)lysine. Pyridoxal 5'-phosphate contacts are provided by residues Gly225 and Glu259–Arg262. Substrate contacts are provided by Arg262, Arg298, and Tyr302. Cys329 acts as the Proton donor in catalysis. Substrate-binding residues include Glu330 and Tyr358. Residue Tyr358 participates in pyridoxal 5'-phosphate binding.

The protein belongs to the Orn/Lys/Arg decarboxylase class-II family. LysA subfamily. In terms of assembly, homodimer. Requires pyridoxal 5'-phosphate as cofactor.

The enzyme catalyses meso-2,6-diaminopimelate + H(+) = L-lysine + CO2. It functions in the pathway amino-acid biosynthesis; L-lysine biosynthesis via DAP pathway; L-lysine from DL-2,6-diaminopimelate: step 1/1. Its function is as follows. Specifically catalyzes the decarboxylation of meso-diaminopimelate (meso-DAP) to L-lysine. The polypeptide is Diaminopimelate decarboxylase (Helicobacter pylori (strain ATCC 700392 / 26695) (Campylobacter pylori)).